A 57-amino-acid polypeptide reads, in one-letter code: Protein translocase subunit SecE (57 aa).

The chain crosses the membrane as a helical span at residues glycine 33–leucine 53.

Belongs to the SecE/SEC61-gamma family. Component of the Sec protein translocase complex. Heterotrimer consisting of SecY (alpha), SecG (beta) and SecE (gamma) subunits. The heterotrimers can form oligomers, although 1 heterotrimer is thought to be able to translocate proteins. Interacts with the ribosome. May interact with SecDF, and other proteins may be involved.

The protein localises to the cell membrane. Functionally, essential subunit of the Sec protein translocation channel SecYEG. Clamps together the 2 halves of SecY. May contact the channel plug during translocation. This chain is Protein translocase subunit SecE, found in Haloferax mediterranei (strain ATCC 33500 / DSM 1411 / JCM 8866 / NBRC 14739 / NCIMB 2177 / R-4) (Halobacterium mediterranei).